Reading from the N-terminus, the 267-residue chain is MYKFAVFGNPINHSLSPNIQNQFAKQTGFEISYDKILAPVDDFVSSVQAFINQGANGFNITVPFKLDAFKFANELTLNAKIAGSVNTIKIEADKIIGENTDGIGLIKDLTHNIGIKLKNKVILILGAGGATQGILFPILKQKPNQVIISNRTHSKAIRLAKNFSKFGNTCSFSLNKIKYKSVDIIINATSASFDGRIPNIAFSIANNAVCYDLMYGYQTPFMSWAKTNHAKMISDGLGMLVEQAAIAFEFWTGAKPDTKKVLSNLRR.

Shikimate contacts are provided by residues 14 to 16 (SLS) and Thr61. Lys65 acts as the Proton acceptor in catalysis. Residues Asn86 and Asp101 each coordinate shikimate. NADP(+) is bound by residues 126-130 (GAGGA), 150-155 (NRTHSK), and Leu213. Tyr215 provides a ligand contact to shikimate. Position 236 (Gly236) interacts with NADP(+).

This sequence belongs to the shikimate dehydrogenase family. As to quaternary structure, homodimer.

The enzyme catalyses shikimate + NADP(+) = 3-dehydroshikimate + NADPH + H(+). It functions in the pathway metabolic intermediate biosynthesis; chorismate biosynthesis; chorismate from D-erythrose 4-phosphate and phosphoenolpyruvate: step 4/7. Involved in the biosynthesis of the chorismate, which leads to the biosynthesis of aromatic amino acids. Catalyzes the reversible NADPH linked reduction of 3-dehydroshikimate (DHSA) to yield shikimate (SA). The polypeptide is Shikimate dehydrogenase (NADP(+)) (Vesicomyosocius okutanii subsp. Calyptogena okutanii (strain HA)).